A 215-amino-acid polypeptide reads, in one-letter code: Probable phosphoglycerate mutase GpmB (215 aa).

Substrate-binding positions include R8–N15, Q21–G22, R58, R60, E82–M85, and G151–M152. H9 (tele-phosphohistidine intermediate) is an active-site residue. E82 (proton donor/acceptor) is an active-site residue.

The protein belongs to the phosphoglycerate mutase family. GpmB subfamily.

It carries out the reaction (2R)-2-phosphoglycerate = (2R)-3-phosphoglycerate. It participates in carbohydrate degradation; glycolysis; pyruvate from D-glyceraldehyde 3-phosphate: step 3/5. This is Probable phosphoglycerate mutase GpmB from Erwinia tasmaniensis (strain DSM 17950 / CFBP 7177 / CIP 109463 / NCPPB 4357 / Et1/99).